The chain runs to 88 residues: EMBRYO SURROUNDING FACTOR 1-like protein 11 (88 aa).

The first 23 residues, 1-23 (MISSSHFAIFCIILVSLFALQQY), serve as a signal peptide directing secretion. Disulfide bonds link C44–C59, C49–C78, C57–C74, and C60–C67.

It belongs to the MEG family. As to expression, expressed in stems.

This is EMBRYO SURROUNDING FACTOR 1-like protein 11 (ESFL11) from Arabidopsis thaliana (Mouse-ear cress).